We begin with the raw amino-acid sequence, 410 residues long: Tryptophan synthase beta chain (410 aa).

Lys-100 is subject to N6-(pyridoxal phosphate)lysine.

It belongs to the TrpB family. As to quaternary structure, tetramer of two alpha and two beta chains. Pyridoxal 5'-phosphate is required as a cofactor.

The catalysed reaction is (1S,2R)-1-C-(indol-3-yl)glycerol 3-phosphate + L-serine = D-glyceraldehyde 3-phosphate + L-tryptophan + H2O. Its pathway is amino-acid biosynthesis; L-tryptophan biosynthesis; L-tryptophan from chorismate: step 5/5. Its function is as follows. The beta subunit is responsible for the synthesis of L-tryptophan from indole and L-serine. The chain is Tryptophan synthase beta chain from Pyrobaculum aerophilum (strain ATCC 51768 / DSM 7523 / JCM 9630 / CIP 104966 / NBRC 100827 / IM2).